We begin with the raw amino-acid sequence, 259 residues long: Thiazole synthase (259 aa).

K98 serves as the catalytic Schiff-base intermediate with DXP. 1-deoxy-D-xylulose 5-phosphate is bound by residues G159, 185-186, and 207-208; these read AG and NS.

It belongs to the ThiG family. As to quaternary structure, homotetramer. Forms heterodimers with either ThiH or ThiS.

The protein localises to the cytoplasm. The enzyme catalyses [ThiS sulfur-carrier protein]-C-terminal-Gly-aminoethanethioate + 2-iminoacetate + 1-deoxy-D-xylulose 5-phosphate = [ThiS sulfur-carrier protein]-C-terminal Gly-Gly + 2-[(2R,5Z)-2-carboxy-4-methylthiazol-5(2H)-ylidene]ethyl phosphate + 2 H2O + H(+). It participates in cofactor biosynthesis; thiamine diphosphate biosynthesis. Catalyzes the rearrangement of 1-deoxy-D-xylulose 5-phosphate (DXP) to produce the thiazole phosphate moiety of thiamine. Sulfur is provided by the thiocarboxylate moiety of the carrier protein ThiS. In vitro, sulfur can be provided by H(2)S. The sequence is that of Thiazole synthase from Chlorobium phaeovibrioides (strain DSM 265 / 1930) (Prosthecochloris vibrioformis (strain DSM 265)).